The following is a 458-amino-acid chain: Transmembrane protein 135 (458 aa).

Helical transmembrane passes span Ile68 to Ile88, Phe96 to Ile116, Thr149 to Phe169, Phe298 to Leu318, Ile331 to Met351, and Ala377 to Val397.

This sequence belongs to the TMEM135 family.

It localises to the mitochondrion membrane. It is found in the peroxisome membrane. Involved in mitochondrial metabolism by regulating the balance between mitochondrial fusion and fission. May act as a regulator of mitochondrial fission that promotes DNM1L-dependent fission through activation of DNM1L. May be involved in peroxisome organization. The chain is Transmembrane protein 135 from Mus musculus (Mouse).